Consider the following 215-residue polypeptide: Peroxiredoxin-5, mitochondrial (215 aa).

The transit peptide at 1-53 (MGLAGVCVLRRSAGYILGGAARQSVAATAAARRRSEGGWASGGVRSFSRAAAA) directs the protein to the mitochondrion. Positions 57 to 215 (IKVGDAIPAV…SLAPSIISQL (159 aa)) constitute a Thioredoxin domain. An N6-acetyllysine modification is found at Lys76. An N6-acetyllysine; alternate modification is found at Lys84. Residue Lys84 is modified to N6-succinyllysine; alternate. Cys101 acts as the Cysteine sulfenic acid (-SOH) intermediate in catalysis. The S-palmitoyl cysteine moiety is linked to residue Cys101. A disulfide bridge links Cys101 with Cys205. Lys117 carries the N6-succinyllysine modification. Phosphoserine occurs at positions 172 and 183. Positions 213 to 215 (SQL) match the Microbody targeting signal motif.

The protein belongs to the peroxiredoxin family. Prx5 subfamily. In terms of assembly, monomer. S-palmitoylated. Palmitoylation occurs on the active site, inhibiting its reactivity; therefore PRDX5 palmitoylation status determines its antioxidant capacity. In terms of processing, S-palmitoylated. Depalmitoylated by ABHD10.

It is found in the mitochondrion. The protein resides in the cytoplasm. Its subcellular location is the peroxisome matrix. The enzyme catalyses a hydroperoxide + [thioredoxin]-dithiol = an alcohol + [thioredoxin]-disulfide + H2O. In terms of biological role, thiol-specific peroxidase that catalyzes the reduction of hydrogen peroxide and organic hydroperoxides to water and alcohols, respectively. Plays a role in cell protection against oxidative stress by detoxifying peroxides and as sensor of hydrogen peroxide-mediated signaling events. The chain is Peroxiredoxin-5, mitochondrial (PRDX5) from Chlorocebus aethiops (Green monkey).